We begin with the raw amino-acid sequence, 434 residues long: Pancreatic lipase-related protein 2 (434 aa).

A disulfide bond links Cys-4 and Cys-10. The segment at 76–88 is required for galactolipase activity; it reads IHGFTDSGENSWL. Cysteines 92 and 103 form a disulfide. The active-site Nucleophile is the Ser-154. Residue Asp-178 is the Charge relay system of the active site. Glu-189, Arg-192, Asp-194, and Asp-197 together coordinate Ca(2+). Residues Cys-239 and Cys-245 are joined by a disulfide bond. The tract at residues 240–244 is required for galactolipase activity; the sequence is KTGIS. Residue His-247 is the Charge relay system of the active site. 2 disulfide bridges follow: Cys-269–Cys-280 and Cys-283–Cys-288. An N-linked (GlcNAc...) asparagine glycan is attached at Asn-318. The 113-residue stretch at 322–434 folds into the PLAT domain; the sequence is WRYKVTVTLS…ENVEQTLSPC (113 aa). Cys-418 and Cys-434 form a disulfide bridge.

The protein belongs to the AB hydrolase superfamily. Lipase family. In terms of tissue distribution, pancreas.

Its subcellular location is the secreted. It localises to the zymogen granule membrane. It is found in the cell projection. The protein resides in the neuron projection. The enzyme catalyses a triacylglycerol + H2O = a diacylglycerol + a fatty acid + H(+). It catalyses the reaction a 1,2-diacyl-3-O-(beta-D-galactosyl)-sn-glycerol + 2 H2O = 3-beta-D-galactosyl-sn-glycerol + 2 a fatty acid + 2 H(+). The catalysed reaction is 1,2,3-tri-(9Z-octadecenoyl)-glycerol + H2O = di-(9Z)-octadecenoylglycerol + (9Z)-octadecenoate + H(+). It carries out the reaction di-(9Z)-octadecenoylglycerol + H2O = (9Z-octadecenoyl)-glycerol + (9Z)-octadecenoate + H(+). The enzyme catalyses (9Z-octadecenoyl)-glycerol + H2O = glycerol + (9Z)-octadecenoate + H(+). It catalyses the reaction 1-(9Z-octadecenoyl)-glycerol + H2O = glycerol + (9Z)-octadecenoate + H(+). The catalysed reaction is 1,2,3-tripropanoylglycerol + H2O = dipropanoylglycerol + propanoate + H(+). It carries out the reaction 1,2,3-tributanoylglycerol + H2O = dibutanoylglycerol + butanoate + H(+). The enzyme catalyses 1,2,3-trioctanoylglycerol + H2O = dioctanoylglycerol + octanoate + H(+). It catalyses the reaction 1,2-didecanoylglycerol + H2O = decanoylglycerol + decanoate + H(+). The catalysed reaction is long chain 1,2-diacyl-3-O-beta-D-galactosyl-sn-glycerol + H2O = long chain acyl-3-O-beta-D-galactosyl-sn-glycerol + a fatty acid + H(+). It carries out the reaction 1,2-dioctanoyl-3-O-beta-D-galactosyl-sn-glycerol + H2O = octanoyl-3-(beta-D-galactosyl)-sn-glycerol + octanoate + H(+). The enzyme catalyses 1,2-didodecanoyl-3-beta-D-galactosyl-sn-glycerol + H2O = dodecanoyl-3-beta-D-galactosyl-sn-glycerol + dodecanoate + H(+). It catalyses the reaction 1-beta-D-galactosyl-2,3-didodecanoyl-sn-glycerol + H2O = 1-beta-D-galactosyl-dodecanoyl-sn-glycerol + dodecanoate + H(+). The catalysed reaction is a 1,2-diacyl-3-O-[alpha-D-galactosyl-(1-&gt;6)-beta-D-galactosyl]-sn-glycerol + H2O = acyl-3-O-[alpha-D-galactosyl-(1-&gt;6)-beta-D-galactosyl]-sn-glycerol + a fatty acid + H(+). It carries out the reaction long chain 1,2-diacyl-3-O-[alpha-D-galactosyl-(1-&gt;6)-beta-D-galactosyl]-sn-glycerol + H2O = long chain acyl-3-O-[alpha-D-galactosyl-(1-&gt;6)-beta-D-galactosyl]-sn-glycerol + a fatty acid + H(+). The enzyme catalyses 1,2-dioctanoyl-3-O-[alpha-D-galactosyl-(1-&gt;6)-beta-D-galactosyl]-sn-glycerol + H2O = octanoyl-3-O-[alpha-D-galactosyl-(1-&gt;6)-beta-D-galactosyl]-sn-glycerol + octanoate + H(+). It catalyses the reaction 1,2-didodecanoyl-3-O-[alpha-D-galactosyl-(1-&gt;6)-beta-D-galactosyl]-sn-glycerol + H2O = dodecanoyl-3-O-[alpha-D-galactosyl-(1-&gt;6)-beta-D-galactosyl]-sn-glycerol + dodecanoate + H(+). The catalysed reaction is a 1,2-diacyl-sn-glycero-3-phosphocholine + H2O = a monoacyl-sn-glycero-3-phosphocholine + a fatty acid + H(+). Its pathway is glycerolipid metabolism; triacylglycerol degradation. It functions in the pathway glycolipid metabolism. With respect to regulation, CLPS stimulates triacylglycerol lipase activity. Not inhibited by bile salts. In terms of biological role, lipase that primarily hydrolyzes triglycerides and galactosylglycerides. In neonates, may play a major role in pancreatic digestion of dietary fats such as milk fat globules enriched in long-chain triglycerides. Hydrolyzes short-, medium- and long-chain fatty acyls in triglycerides without apparent positional specificity. Can completely deacylate triacylglycerols. When the liver matures and bile salt synthesis increases, likely functions mainly as a galactolipase and monoacylglycerol lipase. Hydrolyzes monogalactosyldiglycerols (MGDG) and digalactosyldiacylglycerols (DGDG) present in a plant-based diet, releasing long-chain polyunsaturated fatty acids. Hydrolyzes medium- and long-chain fatty acyls in galactolipids. May act together with LIPF to hydrolyze partially digested triglycerides. Hydrolyzes long-chain monoglycerides with high efficiency. In cytotoxic T cells, contributes to perforin-dependent cell lysis, but is unlikely to mediate direct cytotoxicity. Also has low phospholipase activity. In neurons, required for the localization of the phospholipid 1-oleoyl-2-palmitoyl-PC (OPPC) to neurite tips through acyl chain remodeling of membrane phospholipids. The resulting OPPC-rich lipid membrane domain recruits the t-SNARE protein STX4 by selectively interacting with the STX4 transmembrane domain and this promotes surface expression of the dopamine transporter SLC6A3/DAT at neurite tips by facilitating fusion of SLC6A3-containing transport vesicles with the plasma membrane. The protein is Pancreatic lipase-related protein 2 of Cavia porcellus (Guinea pig).